The following is a 335-amino-acid chain: UPF0353 protein MT1528 (335 aa).

The next 2 membrane-spanning stretches (helical) occupy residues Trp-18–Leu-38 and Val-67–Thr-87. The 197-residue stretch at Val-98–Leu-294 folds into the VWFA domain. The helical transmembrane segment at Val-309–Ile-329 threads the bilayer.

This sequence belongs to the UPF0353 family.

It is found in the cell membrane. The protein is UPF0353 protein MT1528 of Mycobacterium tuberculosis (strain CDC 1551 / Oshkosh).